The primary structure comprises 527 residues: FHA domain-containing protein FhaA (527 aa).

Position 116 is a phosphothreonine (threonine 116). Positions 119–426 are disordered; it reads FRARGTVNPD…APGGYSGYGQ (308 aa). The segment covering 170 to 188 has biased composition (basic and acidic residues); sequence RPDEYYDDRYARPQEDPRG. 2 stretches are compositionally biased toward low complexity: residues 199-209 and 256-266; these read RGGYPPETGGY and YQDQGRGYPDQ. Positions 271-283 are enriched in pro residues; the sequence is YPPPYEQRPPVSP. Residues 284–299 are compositionally biased toward low complexity; that stretch reads GPAAGYGAPGYDQGYR. Gly residues predominate over residues 300–322; that stretch reads QSGGYGPSPGGGQPGYGGYGEYG. Residues 345 to 366 show a composition bias toward low complexity; that stretch reads RPAYPDQGGYDQGYQQGATTYG. One can recognise an FHA domain in the interval 455-504; that stretch reads NIIGRGQDAQFRLPDTGVSRRHLEIRWDGQVALLADLNSTNGTTVNNAPV.

Interacts with (phosphorylated) MviN and (phosphorylated) PknB via the FHA domain. Binds to the PknB juxtamembrane domain with an affinity that is modulated by the degree and the pattern of phosphorylation of this juxtamembrane domain. In terms of processing, phosphorylated by PknB.

It localises to the cytoplasm. In terms of biological role, regulates cell growth and peptidoglycan synthesis by binding to MviN. May inhibit the late stages of peptidoglycan synthesis. This chain is FHA domain-containing protein FhaA (fhaA), found in Mycobacterium tuberculosis (strain ATCC 25618 / H37Rv).